The following is a 146-amino-acid chain: UPF0260 protein Sama_1927 (146 aa).

The protein belongs to the UPF0260 family.

This is UPF0260 protein Sama_1927 from Shewanella amazonensis (strain ATCC BAA-1098 / SB2B).